Here is a 58-residue protein sequence, read N- to C-terminus: Potassium channel toxin alpha-KTx 1.6 (58 aa).

Residues Met1–Ala21 form the signal peptide. A Pyrrolidone carboxylic acid modification is found at Gln22. 3 cysteine pairs are disulfide-bonded: Cys28/Cys49, Cys34/Cys54, and Cys38/Cys56.

Belongs to the short scorpion toxin superfamily. Potassium channel inhibitor family. Alpha-KTx 01 subfamily. Expressed by the venom gland.

It localises to the secreted. Functionally, potent blocker of both large-conductance calcium-activated potassium channels (KCa1.1/KCNMA1) and voltage-gated potassium channels (Kv1.3/KCNA3 and ERG1/Kv11.1/KCNH2). This is Potassium channel toxin alpha-KTx 1.6 from Olivierus martensii (Manchurian scorpion).